Reading from the N-terminus, the 71-residue chain is UPF0352 protein Asuc_0778 (71 aa).

This sequence belongs to the UPF0352 family.

The chain is UPF0352 protein Asuc_0778 from Actinobacillus succinogenes (strain ATCC 55618 / DSM 22257 / CCUG 43843 / 130Z).